Here is a 367-residue protein sequence, read N- to C-terminus: Polygalacturonase (367 aa).

Positions 1–19 are cleaved as a signal peptide; sequence MSIRLIAVLSAASIAVTSA. The cysteines at positions 27 and 42 are disulfide-linked. An N-linked (GlcNAc...) asparagine glycan is attached at asparagine 185. The PbH1 1 repeat unit spans residues 187 to 208; the sequence is TDQLTIEDTVVKNQDDCIAVNQ. Catalysis depends on aspartate 201, which acts as the Proton donor. A disulfide bond links cysteine 203 and cysteine 219. Residue histidine 223 is part of the active site. The PbH1 2 repeat unit spans residues 240-261; that stretch reads VRNVTFSNSVVRKSRNGIHIKT. N-linked (GlcNAc...) asparagine glycosylation is present at asparagine 242. Residues cysteine 334 and cysteine 339 are joined by a disulfide bond. 2 N-linked (GlcNAc...) asparagine glycosylation sites follow: asparagine 343 and asparagine 357. Residues cysteine 358 and cysteine 367 are joined by a disulfide bond.

It belongs to the glycosyl hydrolase 28 family. Expressed in larval carcasses and gut, and adult gut.

It localises to the secreted. It is found in the cell wall. It carries out the reaction (1,4-alpha-D-galacturonosyl)n+m + H2O = (1,4-alpha-D-galacturonosyl)n + (1,4-alpha-D-galacturonosyl)m.. This chain is Polygalacturonase, found in Phaedon cochleariae (Mustard beetle).